We begin with the raw amino-acid sequence, 376 residues long: Cobalt-precorrin-5B C(1)-methyltransferase (376 aa).

Residues 353-376 (KGRTTSTPSHQPAPSSFGDRNRRT) form a disordered region. The segment covering 355-366 (RTTSTPSHQPAP) has biased composition (polar residues).

Belongs to the CbiD family.

The enzyme catalyses Co-precorrin-5B + S-adenosyl-L-methionine = Co-precorrin-6A + S-adenosyl-L-homocysteine. It participates in cofactor biosynthesis; adenosylcobalamin biosynthesis; cob(II)yrinate a,c-diamide from sirohydrochlorin (anaerobic route): step 6/10. Catalyzes the methylation of C-1 in cobalt-precorrin-5B to form cobalt-precorrin-6A. In Agrobacterium fabrum (strain C58 / ATCC 33970) (Agrobacterium tumefaciens (strain C58)), this protein is Cobalt-precorrin-5B C(1)-methyltransferase.